The primary structure comprises 182 residues: Probable RNA 2'-phosphotransferase (182 aa).

Belongs to the KptA/TPT1 family.

In terms of biological role, removes the 2'-phosphate from RNA via an intermediate in which the phosphate is ADP-ribosylated by NAD followed by a presumed transesterification to release the RNA and generate ADP-ribose 1''-2''-cyclic phosphate (APPR&gt;P). May function as an ADP-ribosylase. This is Probable RNA 2'-phosphotransferase from Pseudomonas aeruginosa (strain UCBPP-PA14).